The chain runs to 344 residues: Selenide, water dikinase (344 aa).

Cys-16 is a catalytic residue. Residues Lys-19 and 47 to 49 (SRD) each bind ATP. Asp-50 provides a ligand contact to Mg(2+). ATP-binding positions include Asp-67, Asp-90, and 138 to 140 (GHS). Asp-90 is a binding site for Mg(2+). Asp-226 is a Mg(2+) binding site.

This sequence belongs to the selenophosphate synthase 1 family. Class I subfamily. In terms of assembly, homodimer. Requires Mg(2+) as cofactor.

It carries out the reaction hydrogenselenide + ATP + H2O = selenophosphate + AMP + phosphate + 2 H(+). Synthesizes selenophosphate from selenide and ATP. This Bordetella bronchiseptica (strain ATCC BAA-588 / NCTC 13252 / RB50) (Alcaligenes bronchisepticus) protein is Selenide, water dikinase.